Here is a 243-residue protein sequence, read N- to C-terminus: Small ribosomal subunit protein eS4 (243 aa).

An S4 RNA-binding domain is found at 43-105 (IPLLYIVRDY…TGEHYRVLPN (63 aa)).

This sequence belongs to the eukaryotic ribosomal protein eS4 family.

In Pyrococcus abyssi (strain GE5 / Orsay), this protein is Small ribosomal subunit protein eS4 (rps4e).